Reading from the N-terminus, the 136-residue chain is Gonadotropin subunit beta-2 (136 aa).

The N-terminal stretch at 1-21 (MVCLFLGASSFIWSLAPAAAA) is a signal peptide. 6 disulfides stabilise this stretch: Cys27/Cys75, Cys41/Cys90, Cys44/Cys128, Cys52/Cys106, Cys56/Cys108, and Cys111/Cys118. N-linked (GlcNAc...) asparagine glycosylation is present at Asn31.

Belongs to the glycoprotein hormones subunit beta family. As to quaternary structure, heterodimer of an alpha and a beta chain.

The protein localises to the secreted. Involved in gametogenesis and steroidogenesis. This is Gonadotropin subunit beta-2 (cgbb) from Fundulus heteroclitus (Killifish).